Reading from the N-terminus, the 98-residue chain is Aspartyl/glutamyl-tRNA(Asn/Gln) amidotransferase subunit C (98 aa).

Belongs to the GatC family. In terms of assembly, heterotrimer of A, B and C subunits.

It catalyses the reaction L-glutamyl-tRNA(Gln) + L-glutamine + ATP + H2O = L-glutaminyl-tRNA(Gln) + L-glutamate + ADP + phosphate + H(+). The enzyme catalyses L-aspartyl-tRNA(Asn) + L-glutamine + ATP + H2O = L-asparaginyl-tRNA(Asn) + L-glutamate + ADP + phosphate + 2 H(+). Functionally, allows the formation of correctly charged Asn-tRNA(Asn) or Gln-tRNA(Gln) through the transamidation of misacylated Asp-tRNA(Asn) or Glu-tRNA(Gln) in organisms which lack either or both of asparaginyl-tRNA or glutaminyl-tRNA synthetases. The reaction takes place in the presence of glutamine and ATP through an activated phospho-Asp-tRNA(Asn) or phospho-Glu-tRNA(Gln). The protein is Aspartyl/glutamyl-tRNA(Asn/Gln) amidotransferase subunit C of Micrococcus luteus (strain ATCC 4698 / DSM 20030 / JCM 1464 / CCM 169 / CCUG 5858 / IAM 1056 / NBRC 3333 / NCIMB 9278 / NCTC 2665 / VKM Ac-2230) (Micrococcus lysodeikticus).